Reading from the N-terminus, the 2213-residue chain is Protein sidekick-1 (2213 aa).

The tract at residues 1 to 73 (MARGARPSAA…GAGRCGGRRA (73 aa)) is disordered. The segment covering 23–38 (AGPGRPRGSPPGRARP) has biased composition (low complexity). 5 consecutive Ig-like C2-type domains span residues 104–186 (PYFK…SEVQ), 191–277 (GSFM…SPFI), 293–378 (PTIV…RATA), 386–476 (PYFT…LDVT), and 480–569 (PVFT…ATLT). The cysteines at positions 126 and 169 are disulfide-linked. Asn271 and Asn301 each carry an N-linked (GlcNAc...) asparagine glycan. 3 cysteine pairs are disulfide-bonded: Cys315-Cys362, Cys408-Cys458, and Cys501-Cys553. 3 N-linked (GlcNAc...) asparagine glycosylation sites follow: Asn550, Asn563, and Asn572. Positions 574–663 (TSIVHPPEDH…GNDSRMARLE (90 aa)) constitute an Ig-like C2-type 6 domain. Residues Cys595 and Cys647 are joined by a disulfide bond. N-linked (GlcNAc...) asparagine glycans are attached at residues Asn655, Asn679, Asn782, Asn821, Asn882, Asn1015, and Asn1024. Fibronectin type-III domains lie at 670-766 (SPQN…LPEE), 771-867 (PPKN…TLQG), 872-970 (PPQN…TQED), 974-1068 (AVGH…VPPD), 1072-1171 (APSN…TLQA), 1176-1274 (APTS…TRES), 1279-1376 (APEN…TKDD), 1380-1474 (PPVR…TEKR), 1479-1576 (PPRE…TLQD), 1581-1699 (PPGS…VGEA), 1704-1800 (APQN…THQA), 1804-1899 (APSF…AGPA), and 1902-2000 (SPGS…SAQV). Residues Asn1282 and Asn1333 are each glycosylated (N-linked (GlcNAc...) asparagine). Residues Asn1654, Asn1748, Asn1767, Asn1819, and Asn1893 are each glycosylated (N-linked (GlcNAc...) asparagine). Residues 2010-2030 (FLLVMALSSLIVILLVVFALV) form a helical membrane-spanning segment. The Cytoplasmic portion of the chain corresponds to 2031-2213 (LHGQNKKYKN…TPLTGFSSFV (183 aa)). The disordered stretch occupies residues 2075 to 2098 (STFSKKNGTRSPPRPSPGGLHYSD). The PDZ-binding motif lies at 2207–2213 (TGFSSFV).

The protein belongs to the sidekick family. Homodimer; mediates homophilic interactions to promote cell adhesion. In terms of tissue distribution, up-regulated in glomeruli in HIV-associated nephropathy. In diseased glomeruli, significantly overexpressed and the expression is no longer restricted to mesangial cells but includes podocytes and parietal epithelial cells.

Its subcellular location is the cell membrane. The protein localises to the synapse. Adhesion molecule that promotes lamina-specific synaptic connections in the retina. Expressed in specific subsets of interneurons and retinal ganglion cells (RGCs) and promotes synaptic connectivity via homophilic interactions. In Homo sapiens (Human), this protein is Protein sidekick-1.